The chain runs to 69 residues: DNA gyrase inhibitor YacG (69 aa).

Residues Cys7, Cys10, Cys26, and Cys30 each contribute to the Zn(2+) site.

Belongs to the DNA gyrase inhibitor YacG family. In terms of assembly, interacts with GyrB. Zn(2+) serves as cofactor.

In terms of biological role, inhibits all the catalytic activities of DNA gyrase by preventing its interaction with DNA. Acts by binding directly to the C-terminal domain of GyrB, which probably disrupts DNA binding by the gyrase. This Shewanella sp. (strain W3-18-1) protein is DNA gyrase inhibitor YacG.